The chain runs to 89 residues: Small ribosomal subunit protein uS15 (89 aa).

The protein belongs to the universal ribosomal protein uS15 family. As to quaternary structure, part of the 30S ribosomal subunit. Forms a bridge to the 50S subunit in the 70S ribosome, contacting the 23S rRNA.

Functionally, one of the primary rRNA binding proteins, it binds directly to 16S rRNA where it helps nucleate assembly of the platform of the 30S subunit by binding and bridging several RNA helices of the 16S rRNA. Forms an intersubunit bridge (bridge B4) with the 23S rRNA of the 50S subunit in the ribosome. This is Small ribosomal subunit protein uS15 from Corynebacterium aurimucosum (strain ATCC 700975 / DSM 44827 / CIP 107346 / CN-1) (Corynebacterium nigricans).